Here is a 434-residue protein sequence, read N- to C-terminus: 3-phosphoshikimate 1-carboxyvinyltransferase (434 aa).

Residues K22, S23, and R27 each coordinate 3-phosphoshikimate. K22 is a binding site for phosphoenolpyruvate. The phosphoenolpyruvate site is built by G93 and R121. S168, S169, Q170, S199, D320, and K347 together coordinate 3-phosphoshikimate. Position 170 (Q170) interacts with phosphoenolpyruvate. D320 functions as the Proton acceptor in the catalytic mechanism. Residues R351, R394, and K419 each contribute to the phosphoenolpyruvate site.

Belongs to the EPSP synthase family. Monomer.

The protein localises to the cytoplasm. It catalyses the reaction 3-phosphoshikimate + phosphoenolpyruvate = 5-O-(1-carboxyvinyl)-3-phosphoshikimate + phosphate. Its pathway is metabolic intermediate biosynthesis; chorismate biosynthesis; chorismate from D-erythrose 4-phosphate and phosphoenolpyruvate: step 6/7. Its function is as follows. Catalyzes the transfer of the enolpyruvyl moiety of phosphoenolpyruvate (PEP) to the 5-hydroxyl of shikimate-3-phosphate (S3P) to produce enolpyruvyl shikimate-3-phosphate and inorganic phosphate. In Burkholderia ambifaria (strain ATCC BAA-244 / DSM 16087 / CCUG 44356 / LMG 19182 / AMMD) (Burkholderia cepacia (strain AMMD)), this protein is 3-phosphoshikimate 1-carboxyvinyltransferase.